The chain runs to 350 residues: 3-dehydroquinate synthase (350 aa).

NAD(+) contacts are provided by residues 63-68 (DGEEYK), 97-101 (GVIGD), 121-122 (TT), Lys134, Lys143, and 161-164 (FLKT). 3 residues coordinate Zn(2+): Glu176, His235, and His252.

This sequence belongs to the sugar phosphate cyclases superfamily. Dehydroquinate synthase family. The cofactor is Co(2+). Requires Zn(2+) as cofactor. NAD(+) serves as cofactor.

It is found in the cytoplasm. It catalyses the reaction 7-phospho-2-dehydro-3-deoxy-D-arabino-heptonate = 3-dehydroquinate + phosphate. It functions in the pathway metabolic intermediate biosynthesis; chorismate biosynthesis; chorismate from D-erythrose 4-phosphate and phosphoenolpyruvate: step 2/7. Functionally, catalyzes the conversion of 3-deoxy-D-arabino-heptulosonate 7-phosphate (DAHP) to dehydroquinate (DHQ). This is 3-dehydroquinate synthase from Sulfurovum sp. (strain NBC37-1).